Consider the following 74-residue polypeptide: Protein SOM1, mitochondrial (74 aa).

Component of the mitochondrial inner membrane peptidase (IMP) complex which at least consists of IMP1, IMP2 and SOM1.

The protein localises to the mitochondrion inner membrane. In terms of biological role, non-catalytic component of the mitochondrial inner membrane peptidase (IMP) complex. IMP catalyzes the removal of signal peptides required for the targeting of proteins from the mitochondrial matrix, across the inner membrane, into the inter-membrane space. SOM1 facilitates cleavage of a subset of IMP substrates. This chain is Protein SOM1, mitochondrial (SOM1), found in Saccharomyces cerevisiae (strain ATCC 204508 / S288c) (Baker's yeast).